The chain runs to 313 residues: Putative stilbene synthase 2 (313 aa).

Residue C88 is part of the active site. Residues L191 and 229–231 (GGP) contribute to the substrate site.

Belongs to the thiolase-like superfamily. Chalcone/stilbene synthases family. Homodimer.

The protein localises to the cytoplasm. It carries out the reaction 4-coumaroyl-CoA + 3 malonyl-CoA + 3 H(+) = trans-resveratrol + 4 CO2 + 4 CoA. Its pathway is phytoalexin biosynthesis; 3,4',5-trihydroxystilbene biosynthesis; 3,4',5-trihydroxystilbene from trans-4-coumarate: step 2/2. This chain is Putative stilbene synthase 2, found in Arachis hypogaea (Peanut).